Here is an 86-residue protein sequence, read N- to C-terminus: Putative membrane protein insertion efficiency factor (86 aa).

The segment at Leu-67 to His-86 is disordered.

Belongs to the UPF0161 family.

It localises to the cell inner membrane. Its function is as follows. Could be involved in insertion of integral membrane proteins into the membrane. This chain is Putative membrane protein insertion efficiency factor, found in Photorhabdus laumondii subsp. laumondii (strain DSM 15139 / CIP 105565 / TT01) (Photorhabdus luminescens subsp. laumondii).